A 218-amino-acid polypeptide reads, in one-letter code: uncharacterized protein (218 aa).

The CN hydrolase domain maps to 4-207; it reads WKVAAAQYEP…SLLLVGQRSS (204 aa).

This is an uncharacterized protein from Escherichia coli (strain K12).